A 79-amino-acid chain; its full sequence is Small ribosomal subunit protein bS16cz (79 aa).

This sequence belongs to the bacterial ribosomal protein bS16 family.

It localises to the plastid. The protein resides in the chloroplast. The polypeptide is Small ribosomal subunit protein bS16cz (Arabidopsis thaliana (Mouse-ear cress)).